The following is a 204-amino-acid chain: uncharacterized protein (204 aa).

A signal peptide spans 1 to 21; it reads MIKKFLLFAMLNIFLTNKAHS.

This is an uncharacterized protein from Borreliella burgdorferi (strain ATCC 35210 / DSM 4680 / CIP 102532 / B31) (Borrelia burgdorferi).